The primary structure comprises 302 residues: MLDVNSVRKHVLKTGSLTSAVGTGTIYQGTYNRYAKKKELNIIVTSSGSNNVIMRQVPLFDKEDLDAMKSDTTSNKYLHIGCITVSIEPLLHQRYMKNFGKTIAGNCAIIDSTFRKVDQSIISLHKYDLSRGRADYVSYPNHCLSLTDPMIQKRLSVLLGIKGIDVEPGVELFSICIGYIVSSVNTLHPVSQLGIQGVAINGTESADIDELGAEDIDQLSLSYNDSKIISLPSDEDIYYRSKGSLFSKGRTIKRRTMRTRVPDPEEPIKLTKSQSSRIEHGKVMRLLKNKQIREKIERGMIA.

Transports viral genome to neighboring plant cells directly through plasmosdesmata, without any budding. The movement protein allows efficient cell to cell propagation, by bypassing the host cell wall barrier. This is Probable movement protein 4b (4b) from Embergeria (Garden lettuce).